Here is a 251-residue protein sequence, read N- to C-terminus: 5'-nucleotidase SurE (251 aa).

4 residues coordinate a divalent metal cation: D8, D9, S39, and N91.

It belongs to the SurE nucleotidase family. Requires a divalent metal cation as cofactor.

The protein resides in the cytoplasm. The catalysed reaction is a ribonucleoside 5'-phosphate + H2O = a ribonucleoside + phosphate. Functionally, nucleotidase that shows phosphatase activity on nucleoside 5'-monophosphates. This is 5'-nucleotidase SurE from Nitrosococcus oceani (strain ATCC 19707 / BCRC 17464 / JCM 30415 / NCIMB 11848 / C-107).